Reading from the N-terminus, the 189-residue chain is MLERLKKSLLEAPVFKRGEYDYFIHPITDGVPEIRPDLIREVTANIVRIANLDVDKIVTVEAMGIPIGIVLSILCDIPLVIIRKRKYGLPNEVEISQVTGYSRSQLYLNGINRGDRVIVVDDVISTGGTLQATLDSMELAGAEVMDTVIVVERGNGAELLRSKGYNLKTMVRVKVEGGRVSEVEPGISK.

This sequence belongs to the purine/pyrimidine phosphoribosyltransferase family. Archaeal HPRT subfamily. Homodimer.

It is found in the cytoplasm. It carries out the reaction IMP + diphosphate = hypoxanthine + 5-phospho-alpha-D-ribose 1-diphosphate. It catalyses the reaction GMP + diphosphate = guanine + 5-phospho-alpha-D-ribose 1-diphosphate. It participates in purine metabolism; IMP biosynthesis via salvage pathway; IMP from hypoxanthine: step 1/1. Its function is as follows. Catalyzes a salvage reaction resulting in the formation of IMP that is energically less costly than de novo synthesis. The polypeptide is Hypoxanthine/guanine phosphoribosyltransferase (Methanothrix soehngenii (strain ATCC 5969 / DSM 3671 / JCM 10134 / NBRC 103675 / OCM 69 / GP-6) (Methanosaeta concilii)).